The primary structure comprises 419 residues: Tyrosine--tRNA ligase (419 aa).

An L-tyrosine-binding site is contributed by Tyr34. The 'HIGH' region motif lies at 39-48; sequence PSGDSMHIGH. L-tyrosine contacts are provided by Tyr168 and Gln172. The 'KMSKS' region motif lies at 230–234; sequence KFGKS. Lys233 is an ATP binding site. The S4 RNA-binding domain occupies 352-418; that stretch reads ANLVDWLVTL…GKKKYFLVSY (67 aa).

This sequence belongs to the class-I aminoacyl-tRNA synthetase family. TyrS type 1 subfamily. In terms of assembly, homodimer.

It localises to the cytoplasm. The enzyme catalyses tRNA(Tyr) + L-tyrosine + ATP = L-tyrosyl-tRNA(Tyr) + AMP + diphosphate + H(+). In terms of biological role, catalyzes the attachment of tyrosine to tRNA(Tyr) in a two-step reaction: tyrosine is first activated by ATP to form Tyr-AMP and then transferred to the acceptor end of tRNA(Tyr). The chain is Tyrosine--tRNA ligase from Listeria monocytogenes serotype 4b (strain CLIP80459).